Here is a 432-residue protein sequence, read N- to C-terminus: Teosinte glume architecture 1 (432 aa).

Disordered stretches follow at residues 20-55 and 68-102; these read HAAAAPSSGGHAANAAAAGTGTESRPPAPGAAGAPA and ECEPGAARREREAAAGAAKRPRPAGPGGQQQQQQC. Low complexity predominate over residues 22–41; it reads AAAPSSGGHAANAAAAGTGT. Residues 102–179 form an SBP-type zinc finger; sequence CPSCAVDGCR…DGHNRRRRKP (78 aa). Residues cysteine 105, cysteine 110, cysteine 127, histidine 130, cysteine 146, cysteine 149, histidine 153, and cysteine 165 each contribute to the Zn(2+) site. A compositionally biased stretch (gly residues) spans 409–420; the sequence is GGGSGGGEGSSD. A disordered region spans residues 409 to 432; that stretch reads GGGSGGGEGSSDGGTSSSMPFSWQ.

As to quaternary structure, monomer and homodimer. Strongly expressed in immature ears and weakly in husks. Found in the inflorescence meristem of the developing ear, in the spikelet pair primordia, the glume primordia, the cupule forming region and other floral organs. Not detected in other tissues.

SBP transcriptional regulator probably involved in the domestication of maize. Acts as a transcriptional repressor binding to a 5'-GTAC-3' motif. May repress the growth of lateral branches in length and numbers. This is Teosinte glume architecture 1 from Zea mays (Maize).